The chain runs to 217 residues: 3-demethoxyubiquinol 3-hydroxylase (217 aa).

Residues E66, E96, H99, E148, E180, and H183 each coordinate Fe cation.

This sequence belongs to the COQ7 family. It depends on Fe cation as a cofactor.

The protein localises to the cell membrane. The catalysed reaction is a 5-methoxy-2-methyl-3-(all-trans-polyprenyl)benzene-1,4-diol + AH2 + O2 = a 3-demethylubiquinol + A + H2O. Its pathway is cofactor biosynthesis; ubiquinone biosynthesis. Functionally, catalyzes the hydroxylation of 2-nonaprenyl-3-methyl-6-methoxy-1,4-benzoquinol during ubiquinone biosynthesis. The protein is 3-demethoxyubiquinol 3-hydroxylase of Xanthomonas euvesicatoria pv. vesicatoria (strain 85-10) (Xanthomonas campestris pv. vesicatoria).